The chain runs to 345 residues: MATYHHWTVGQALALFDKPLLELLFEAQQVHRQHFDPRQVQVSTLLSIKTGACPEDCKYCPQSSRYKTGLESERLMQVEQVLESAKKAKAAGSTRFCMGAAWKNPHERDMPYLAKMVEGVKALGMETCMTLGSLSKQQAHRLADAGLDYYNHNLDTSPEFYGSIITTRSYQERLDTLNEVRDAGIKVCSGGIVGLGETVRDRAGLLVQLANLPKPPESVPINMLVKVKGTPLENNAEVDAFEFIRTIAVARIMMPSSYVRLSAGREQMNEQTQAMCFMAGANSIFYGCKLLTTPNPDEDKDLQLFRKLGLNPQQTATSHGDREQQQALTEQLLHGDTAQFYNAAV.

The Radical SAM core domain maps to 38–256; it reads RQVQVSTLLS…IAVARIMMPS (219 aa). C53, C57, and C60 together coordinate [4Fe-4S] cluster. [2Fe-2S] cluster is bound by residues C97, C128, C188, and R260.

This sequence belongs to the radical SAM superfamily. Biotin synthase family. In terms of assembly, homodimer. [4Fe-4S] cluster is required as a cofactor. Requires [2Fe-2S] cluster as cofactor.

It catalyses the reaction (4R,5S)-dethiobiotin + (sulfur carrier)-SH + 2 reduced [2Fe-2S]-[ferredoxin] + 2 S-adenosyl-L-methionine = (sulfur carrier)-H + biotin + 2 5'-deoxyadenosine + 2 L-methionine + 2 oxidized [2Fe-2S]-[ferredoxin]. It participates in cofactor biosynthesis; biotin biosynthesis; biotin from 7,8-diaminononanoate: step 2/2. Functionally, catalyzes the conversion of dethiobiotin (DTB) to biotin by the insertion of a sulfur atom into dethiobiotin via a radical-based mechanism. This Yersinia pestis bv. Antiqua (strain Antiqua) protein is Biotin synthase.